Consider the following 473-residue polypeptide: MKILYSPRRFYPVETLFNGTLSLGGRDQETTGFAWWAGNARLINLSGKLLGAHVAHAGLIVFWAGAMNLFEVAHFVSEKPMYEQGLILLPHLATLGWGVGPGGEVADTFPYFVSGVLHLISSAVLGFGGIYHALIGPETLEESFPFFGYTWKDKNKMTTILGIHLILLGFGAFLLVFKALYFGGLYDTWAPGGGDVREITNLTLNPNIIFGYLLKSPFGGEGWIASVDNLEDIIGGHVWLGSICIFGGIWHILTKPFAWARRAFVWSGEAYLSYSLGALAIFGFTACCFVWFNNTAYPSEFYGPTGPEASQAQAFTFLVRDQRLGANIGSAQGPTGLGKYLMRSPTGEIIFGGETMRFWDLRAPWLEPLRGPNGLDLGKLKRDIQPWQERRSAEYMTHAPLGSLNSVGGVATEINAVNYVSPRSWLATSHFVLGFFFFVGHLWHAGRARAAAAGFEKGIDRDTEPVLSMTPLN.

The propeptide occupies 1-14 (MKILYSPRRFYPVE). Position 15 is an N-acetylthreonine (Thr15). The residue at position 15 (Thr15) is a Phosphothreonine. The next 5 membrane-spanning stretches (helical) occupy residues 69–93 (LFEV…PHLA), 134–155 (LIGP…KDKN), 178–200 (KALY…REIT), 255–275 (KPFA…LSYS), and 291–312 (WFNN…ASQA). [CaMn4O5] cluster is bound at residue Glu367. A helical transmembrane segment spans residues 447 to 471 (RARAAAAGFEKGIDRDTEPVLSMTP).

The protein belongs to the PsbB/PsbC family. PsbC subfamily. PSII is composed of 1 copy each of membrane proteins PsbA, PsbB, PsbC, PsbD, PsbE, PsbF, PsbH, PsbI, PsbJ, PsbK, PsbL, PsbM, PsbT, PsbX, PsbY, PsbZ, Psb30/Ycf12, at least 3 peripheral proteins of the oxygen-evolving complex and a large number of cofactors. It forms dimeric complexes. Requires Binds multiple chlorophylls and provides some of the ligands for the Ca-4Mn-5O cluster of the oxygen-evolving complex. It may also provide a ligand for a Cl- that is required for oxygen evolution. PSII binds additional chlorophylls, carotenoids and specific lipids. as cofactor.

The protein localises to the plastid. It is found in the chloroplast thylakoid membrane. In terms of biological role, one of the components of the core complex of photosystem II (PSII). It binds chlorophyll and helps catalyze the primary light-induced photochemical processes of PSII. PSII is a light-driven water:plastoquinone oxidoreductase, using light energy to abstract electrons from H(2)O, generating O(2) and a proton gradient subsequently used for ATP formation. The chain is Photosystem II CP43 reaction center protein from Adiantum capillus-veneris (Maidenhair fern).